The chain runs to 382 residues: Methylthioribose-1-phosphate isomerase (382 aa).

Asp-258 acts as the Proton donor in catalysis.

It belongs to the eIF-2B alpha/beta/delta subunits family. MtnA subfamily.

It is found in the cytoplasm. Its subcellular location is the nucleus. The catalysed reaction is 5-(methylsulfanyl)-alpha-D-ribose 1-phosphate = 5-(methylsulfanyl)-D-ribulose 1-phosphate. It participates in amino-acid biosynthesis; L-methionine biosynthesis via salvage pathway; L-methionine from S-methyl-5-thio-alpha-D-ribose 1-phosphate: step 1/6. Its function is as follows. Catalyzes the interconversion of methylthioribose-1-phosphate (MTR-1-P) into methylthioribulose-1-phosphate (MTRu-1-P). In Laccaria bicolor (strain S238N-H82 / ATCC MYA-4686) (Bicoloured deceiver), this protein is Methylthioribose-1-phosphate isomerase.